The primary structure comprises 344 residues: Lipase chaperone (344 aa).

The helical transmembrane segment at 14 to 34 threads the bilayer; sequence VAVYGAVGLAAIAGVAIWSGA.

The protein belongs to the lipase chaperone family.

It localises to the cell inner membrane. Functionally, may be involved in the folding of the extracellular lipase during its passage through the periplasm. This chain is Lipase chaperone, found in Burkholderia ambifaria (strain MC40-6).